The primary structure comprises 253 residues: Triosephosphate isomerase (253 aa).

8 to 10 (NWK) is a substrate binding site. H93 (electrophile) is an active-site residue. Residue E165 is the Proton acceptor of the active site. Substrate contacts are provided by residues G171, S210, and 231–232 (GG).

The protein belongs to the triosephosphate isomerase family. As to quaternary structure, homodimer.

Its subcellular location is the cytoplasm. It catalyses the reaction D-glyceraldehyde 3-phosphate = dihydroxyacetone phosphate. The protein operates within carbohydrate biosynthesis; gluconeogenesis. It functions in the pathway carbohydrate degradation; glycolysis; D-glyceraldehyde 3-phosphate from glycerone phosphate: step 1/1. In terms of biological role, involved in the gluconeogenesis. Catalyzes stereospecifically the conversion of dihydroxyacetone phosphate (DHAP) to D-glyceraldehyde-3-phosphate (G3P). The protein is Triosephosphate isomerase of Francisella tularensis subsp. holarctica (strain FTNF002-00 / FTA).